Reading from the N-terminus, the 364-residue chain is tRNA 2-selenouridine synthase (364 aa).

The region spanning 14 to 137 (LIADTPIIDV…LRQTAIQATI (124 aa)) is the Rhodanese domain. Residue Cys-97 is the S-selanylcysteine intermediate of the active site.

Belongs to the SelU family. As to quaternary structure, monomer.

The enzyme catalyses 5-methylaminomethyl-2-thiouridine(34) in tRNA + selenophosphate + (2E)-geranyl diphosphate + H2O + H(+) = 5-methylaminomethyl-2-selenouridine(34) in tRNA + (2E)-thiogeraniol + phosphate + diphosphate. The catalysed reaction is 5-methylaminomethyl-2-thiouridine(34) in tRNA + (2E)-geranyl diphosphate = 5-methylaminomethyl-S-(2E)-geranyl-thiouridine(34) in tRNA + diphosphate. It carries out the reaction 5-methylaminomethyl-S-(2E)-geranyl-thiouridine(34) in tRNA + selenophosphate + H(+) = 5-methylaminomethyl-2-(Se-phospho)selenouridine(34) in tRNA + (2E)-thiogeraniol. It catalyses the reaction 5-methylaminomethyl-2-(Se-phospho)selenouridine(34) in tRNA + H2O = 5-methylaminomethyl-2-selenouridine(34) in tRNA + phosphate. Functionally, involved in the post-transcriptional modification of the uridine at the wobble position (U34) of tRNA(Lys), tRNA(Glu) and tRNA(Gln). Catalyzes the conversion of 2-thiouridine (S2U-RNA) to 2-selenouridine (Se2U-RNA). Acts in a two-step process involving geranylation of 2-thiouridine (S2U) to S-geranyl-2-thiouridine (geS2U) and subsequent selenation of the latter derivative to 2-selenouridine (Se2U) in the tRNA chain. This is tRNA 2-selenouridine synthase from Shigella flexneri serotype 5b (strain 8401).